A 355-amino-acid chain; its full sequence is Mannonate dehydratase (355 aa).

This sequence belongs to the mannonate dehydratase family. It depends on Fe(2+) as a cofactor. Mn(2+) is required as a cofactor.

The enzyme catalyses D-mannonate = 2-dehydro-3-deoxy-D-gluconate + H2O. Its pathway is carbohydrate metabolism; pentose and glucuronate interconversion. In terms of biological role, catalyzes the dehydration of D-mannonate. This Brachyspira hyodysenteriae (strain ATCC 49526 / WA1) protein is Mannonate dehydratase.